The chain runs to 250 residues: 3-deoxy-manno-octulosonate cytidylyltransferase (250 aa).

This sequence belongs to the KdsB family.

It localises to the cytoplasm. It catalyses the reaction 3-deoxy-alpha-D-manno-oct-2-ulosonate + CTP = CMP-3-deoxy-beta-D-manno-octulosonate + diphosphate. The protein operates within nucleotide-sugar biosynthesis; CMP-3-deoxy-D-manno-octulosonate biosynthesis; CMP-3-deoxy-D-manno-octulosonate from 3-deoxy-D-manno-octulosonate and CTP: step 1/1. Its pathway is bacterial outer membrane biogenesis; lipopolysaccharide biosynthesis. Activates KDO (a required 8-carbon sugar) for incorporation into bacterial lipopolysaccharide in Gram-negative bacteria. The chain is 3-deoxy-manno-octulosonate cytidylyltransferase from Herminiimonas arsenicoxydans.